The sequence spans 471 residues: Putative multidrug resistance protein MdtD (471 aa).

The Periplasmic portion of the chain corresponds to 1–11; the sequence is MTDLPDSTRWQ. A helical transmembrane segment spans residues 12–32; it reads LWIVAFGFFMQSLDTTIVNTA. Residues 33-48 lie on the Cytoplasmic side of the membrane; the sequence is LPSMAQSLGESPLHMH. Residues 49–69 form a helical membrane-spanning segment; that stretch reads MVIVSYVLTVAVMLPASGWLA. The Periplasmic segment spans residues 70–76; the sequence is DKVGVRN. A helical membrane pass occupies residues 77 to 97; that stretch reads IFFTAIVLFTLGSLFCALSGT. Over 98–101 the chain is Cytoplasmic; it reads LNEL. The helical transmembrane segment at 102–124 threads the bilayer; sequence LLARALQGVGGAMMVPVGRLTVM. Residues 125–137 are Periplasmic-facing; sequence KIVPREQYMAAMT. The chain crosses the membrane as a helical span at residues 138 to 158; that stretch reads FVTLPGQVGPLLGPALGGLLV. Over 159–164 the chain is Cytoplasmic; the sequence is EYASWH. A helical transmembrane segment spans residues 165–185; it reads WIFLINIPVGIIGAIATLMLM. Residues 186–196 lie on the Periplasmic side of the membrane; that stretch reads PNYTMQTRRFD. Residues 197-217 traverse the membrane as a helical segment; the sequence is LSGFLLLAVGMAVLTLALDGS. The Cytoplasmic portion of the chain corresponds to 218 to 224; it reads KGTGLSP. Residues 225 to 245 form a helical membrane-spanning segment; it reads LAIAGLVAVGVVALVLYLLHA. Topologically, residues 246–262 are periplasmic; that stretch reads RNNNRALFSLKLFRTRT. The chain crosses the membrane as a helical span at residues 263–283; it reads FSLGLAGSFAGRIGSGMLPFM. At 284-285 the chain is on the cytoplasmic side; it reads TP. Residues 286 to 306 form a helical membrane-spanning segment; it reads VFLQIGLGFSPFHAGLMMIPM. Topologically, residues 307-341 are periplasmic; sequence VLGSMGMKRIVVQVVNRFGYRRVLVATTLGLSLVT. A helical transmembrane segment spans residues 342–362; the sequence is LLFMTTALLGWYYVLPFVLFL. Residues 363–395 lie on the Cytoplasmic side of the membrane; sequence QGMVNSTRFSSMNTLTLKDLPDNLASSGNSLLS. The helical transmembrane segment at 396 to 416 threads the bilayer; that stretch reads MIMQLSMSIGVTIAGLLLGLF. Residues 417–430 lie on the Periplasmic side of the membrane; that stretch reads GSQHISVDSGTTQT. Residues 431-451 traverse the membrane as a helical segment; the sequence is VFMYTWLSMAFIIALPAFIFA. Topologically, residues 452–471 are cytoplasmic; the sequence is RVPNDTHQNVAISRRKRSAQ.

It belongs to the major facilitator superfamily. TCR/Tet family.

The protein localises to the cell inner membrane. The protein is Putative multidrug resistance protein MdtD of Shigella flexneri.